The primary structure comprises 353 residues: UDP-N-acetylglucosamine--N-acetylmuramyl-(pentapeptide) pyrophosphoryl-undecaprenol N-acetylglucosamine transferase (353 aa).

UDP-N-acetyl-alpha-D-glucosamine is bound by residues 14–16 (TGG), N126, R162, S190, I243, 262–267 (ALTVSE), and Q287.

Belongs to the glycosyltransferase 28 family. MurG subfamily.

The protein resides in the cell inner membrane. The catalysed reaction is di-trans,octa-cis-undecaprenyl diphospho-N-acetyl-alpha-D-muramoyl-L-alanyl-D-glutamyl-meso-2,6-diaminopimeloyl-D-alanyl-D-alanine + UDP-N-acetyl-alpha-D-glucosamine = di-trans,octa-cis-undecaprenyl diphospho-[N-acetyl-alpha-D-glucosaminyl-(1-&gt;4)]-N-acetyl-alpha-D-muramoyl-L-alanyl-D-glutamyl-meso-2,6-diaminopimeloyl-D-alanyl-D-alanine + UDP + H(+). It participates in cell wall biogenesis; peptidoglycan biosynthesis. In terms of biological role, cell wall formation. Catalyzes the transfer of a GlcNAc subunit on undecaprenyl-pyrophosphoryl-MurNAc-pentapeptide (lipid intermediate I) to form undecaprenyl-pyrophosphoryl-MurNAc-(pentapeptide)GlcNAc (lipid intermediate II). The polypeptide is UDP-N-acetylglucosamine--N-acetylmuramyl-(pentapeptide) pyrophosphoryl-undecaprenol N-acetylglucosamine transferase (Vibrio atlanticus (strain LGP32) (Vibrio splendidus (strain Mel32))).